The sequence spans 300 residues: MSYYFKNLKPDLNSDVEEDDGNLLESIMANKSKREIDEQESSDDELKTLSFGSLKKAETIIDEEDFKDTKPVHKKPITTTYREESFDEDDDSEDKSDEDAGFFEEDSEDETHHGQKVPKKKSKHAPIEQSSKKRVPRVRNIPGLEIPRNKRSNLYQDIRFDKSTGKALDSSIIRKRYQFLDEYREKEIDELQKLLQDRKFLSKIDQGEREEMEQRLKSMKSRLQSMKNKDLEREILKEYENDMNKNNNTRYHLKKSEKRKVVQKWKFDHMKAKQREKVMERKRKKRLGKEFKQFEFHNRR.

Residues Ser14, Ser41, and Ser42 each carry the phosphoserine modification. The disordered stretch occupies residues 60-146 (IIDEEDFKDT…RVRNIPGLEI (87 aa)). Residues 85 to 109 (SFDEDDDSEDKSDEDAGFFEEDSED) show a composition bias toward acidic residues. Residues 114 to 124 (GQKVPKKKSKH) show a composition bias toward basic residues. Residues 203–248 (KIDQGEREEMEQRLKSMKSRLQSMKNKDLEREILKEYENDMNKNNN) are a coiled coil.

This sequence belongs to the RRP36 family. In terms of assembly, associates with 90S and pre-40S pre-ribosomal particles. Interacts with CKA1, CKA2, CKB1, CKB2, PWP2, UTP15, UTP17 and UTP22.

Its subcellular location is the nucleus. The protein resides in the nucleolus. Functionally, component of the 90S pre-ribosome involved in the maturation of rRNAs. Required for early cleavages of the pre-RNAs in the 40S ribosomal subunit maturation pathway. The chain is rRNA biogenesis protein RRP36 (RRP36) from Saccharomyces cerevisiae (strain JAY291) (Baker's yeast).